Here is a 197-residue protein sequence, read N- to C-terminus: MIPIVIEESGRGERAFDIYSRLLRERIIFLGEPVTSDSANRIVAQMLFLEAEDPEKDIYLYINSPGGSVYDGLGIFDTMQHVKPDVQTVCVGLAASMGAFLLCAGAMGKRSSLQHSRIMIHQPLGGARGQASDIRIQADEILFLKDRLNRVLADRTGQPLERIQEDTDRDFFMSPAEAVGYGLVDSVIDKRPVHSVN.

The active-site Nucleophile is the S96. Residue H121 is part of the active site.

The protein belongs to the peptidase S14 family. Fourteen ClpP subunits assemble into 2 heptameric rings which stack back to back to give a disk-like structure with a central cavity, resembling the structure of eukaryotic proteasomes.

The protein localises to the cytoplasm. The catalysed reaction is Hydrolysis of proteins to small peptides in the presence of ATP and magnesium. alpha-casein is the usual test substrate. In the absence of ATP, only oligopeptides shorter than five residues are hydrolyzed (such as succinyl-Leu-Tyr-|-NHMec, and Leu-Tyr-Leu-|-Tyr-Trp, in which cleavage of the -Tyr-|-Leu- and -Tyr-|-Trp bonds also occurs).. Cleaves peptides in various proteins in a process that requires ATP hydrolysis. Has a chymotrypsin-like activity. Plays a major role in the degradation of misfolded proteins. In Prochlorococcus marinus (strain MIT 9313), this protein is ATP-dependent Clp protease proteolytic subunit 3.